A 1331-amino-acid chain; its full sequence is X-linked retinitis pigmentosa GTPase regulator-interacting protein 1 (1331 aa).

Disordered stretches follow at residues 1-165 (MQHL…PPAF), 183-220 (SQLT…SEEC), and 351-374 (HQPL…LPPQ). The segment covering 41 to 67 (NQKELNCRRLHLHEEPTLVKEPSPKQR) has biased composition (basic and acidic residues). Composition is skewed to polar residues over residues 77–86 (VQRSTTTQPD) and 183–193 (SQLTHTMTTDS). Basic and acidic residues predominate over residues 194–220 (THVEEIPRSPEKTSKVEKPEQRSSEEC). 2 coiled-coil regions span residues 236–352 (ELIR…SSHQ) and 498–546 (MCYQ…LRSH). Over residues 351-367 (HQPLDSSHQPHWSTELT) the composition is skewed to polar residues. One can recognise a C2 domain in the interval 745–870 (GARKVQSNES…AQNKSIKGDF (126 aa)). Disordered regions lie at residues 899-1057 (FQMS…VQDK) and 1088-1146 (AEDG…SDDI). Residues 908 to 999 (EGEEKEEEGG…DVLEASFTEE (92 aa)) adopt a coiled-coil conformation. Acidic residues predominate over residues 910–988 (EEKEEEGGEE…EEEEEEEDEN (79 aa)). Basic and acidic residues-rich tracts occupy residues 1022–1039 (PEKR…REHQ) and 1088–1115 (AEDG…EHPS). The segment covering 1129–1141 (CEQASEVSETQTT) has biased composition (polar residues). The interval 1136 to 1326 (SETQTTDSDD…ALHGIYKEMT (191 aa)) is interaction with RPGR.

It belongs to the RPGRIP1 family. As to quaternary structure, interacts with NPHP4. Interacts with NEK4. Forms homodimers and elongated homopolymers. Interacts with RPGR. Interacts with SPATA7. Interacts with CEP290/NPHP6; mediating the association between RPGR and CEP290/NPHP6. Expressed in the retina (at protein level).

The protein resides in the cell projection. Its subcellular location is the cilium. May function as scaffolding protein. Required for normal location of RPGR at the connecting cilium of photoreceptor cells. Required for normal disk morphogenesis and disk organization in the outer segment of photoreceptor cells and for survival of photoreceptor cells. This is X-linked retinitis pigmentosa GTPase regulator-interacting protein 1 (Rpgrip1) from Mus musculus (Mouse).